The following is a 409-amino-acid chain: Tyrosine--tRNA ligase (409 aa).

Positions 54–63 (PTAPDIHLGH) match the 'HIGH' region motif. Residues 238-242 (KMSKS) carry the 'KMSKS' region motif. Lys241 serves as a coordination point for ATP. The 61-residue stretch at 347–407 (QGILRILREA…GKRKFARVKL (61 aa)) folds into the S4 RNA-binding domain.

Belongs to the class-I aminoacyl-tRNA synthetase family. TyrS type 2 subfamily. In terms of assembly, homodimer.

It is found in the cytoplasm. It catalyses the reaction tRNA(Tyr) + L-tyrosine + ATP = L-tyrosyl-tRNA(Tyr) + AMP + diphosphate + H(+). Functionally, catalyzes the attachment of tyrosine to tRNA(Tyr) in a two-step reaction: tyrosine is first activated by ATP to form Tyr-AMP and then transferred to the acceptor end of tRNA(Tyr). In Bordetella pertussis (strain Tohama I / ATCC BAA-589 / NCTC 13251), this protein is Tyrosine--tRNA ligase.